The primary structure comprises 358 residues: Psilocybin cluster transcription regulator (358 aa).

Disordered regions lie at residues 1-40 and 62-212; these read MAPA…IAGM and SGGK…RRRR. The span at 18 to 29 shows a compositional bias: pro residues; the sequence is PPAPGAPAPANA. Residues 79-91 show a composition bias toward polar residues; sequence QTLSNLAQAQPYG. Positions 179 to 190 are enriched in low complexity; the sequence is PTTGRRGGRSAT. Basic and acidic residues predominate over residues 195-209; that stretch reads EWSRQRKDNHKEVER. The basic motif stretch occupies residues 199–212; that stretch reads QRKDNHKEVERRRR. In terms of domain architecture, bHLH spans 199 to 249; that stretch reads QRKDNHKEVERRRRGNINEGINELGRIVPSGSGEKAKGAILSRAVQYIHHL. The helix-loop-helix motif stretch occupies residues 213 to 249; sequence GNINEGINELGRIVPSGSGEKAKGAILSRAVQYIHHL. Residues 264–306 adopt a coiled-coil conformation; that stretch reads KLLMDQAMGDLQAQLEEVKRLWEEERMARTRLEAELEVLRNMN. The interval 308–358 is disordered; sequence VNAGSAPASKDESAAGTKRRSTDGAEAATAATESSTANAEGERDGKRQRTE. The span at 331 to 346 shows a compositional bias: low complexity; it reads GAEAATAATESSTANA. Positions 347–358 are enriched in basic and acidic residues; that stretch reads EGERDGKRQRTE.

The protein resides in the nucleus. Functionally, transcription factor that may regulate the expression of the gene cluster that mediates the biosynthesis of psilocybin, a psychotropic tryptamine-derived natural product. The polypeptide is Psilocybin cluster transcription regulator (Psilocybe cubensis (Psychedelic mushroom)).